The chain runs to 110 residues: uncharacterized protein (110 aa).

A helical membrane pass occupies residues 29-49; the sequence is GLAFIFFFLVAFYFFPAFWDL.

The protein localises to the membrane. This is an uncharacterized protein from Saccharomyces cerevisiae (strain ATCC 204508 / S288c) (Baker's yeast).